Here is a 328-residue protein sequence, read N- to C-terminus: Delta-aminolevulinic acid dehydratase (328 aa).

The active-site Schiff-base intermediate with substrate is the lysine 200. 5-aminolevulinate contacts are provided by arginine 210 and lysine 222. Mg(2+) is bound at residue glutamate 238. Lysine 253 acts as the Schiff-base intermediate with substrate in catalysis. 5-aminolevulinate-binding residues include serine 279 and tyrosine 318.

Belongs to the ALAD family. As to quaternary structure, homooctamer.

The catalysed reaction is 2 5-aminolevulinate = porphobilinogen + 2 H2O + H(+). Its pathway is porphyrin-containing compound metabolism; protoporphyrin-IX biosynthesis; coproporphyrinogen-III from 5-aminolevulinate: step 1/4. Its activity is regulated as follows. Stimulated by magnesium, inhibited by zinc. Its function is as follows. Catalyzes an early step in the biosynthesis of tetrapyrroles. Binds two molecules of 5-aminolevulinate per subunit, each at a distinct site, and catalyzes their condensation to form porphobilinogen. The protein is Delta-aminolevulinic acid dehydratase (hemB) of Chlorobaculum parvum (strain DSM 263 / NCIMB 8327) (Chlorobium vibrioforme subsp. thiosulfatophilum).